A 705-amino-acid chain; its full sequence is MARDYPLELYRNFGIMAHIDAGKTTTTERILYYTGKSHKIGEVHDGAATMDWMEQEQERGITITSAATTTFWERTEDGKTPLSPKHRFNIIDTPGHVDFTIEVERSLAVLDGAVCLLDANAGVEPQTETVWRQADRYKVPRIVFVNKMDKIGADFFNCVKMIKDRTGATPAPIALPIGAEDKLEGIIDLVTMQEWVYQGEDLGASWIIKDVRDELKAEAEEWRGKLIELAVEQDDEAMEAYLEGNEPDVPTLRKLIRKGCLAMAFVPVTAGSAFKNKGVQPVLNSVIDYLPSPLDVPAYMGFAPGDETETRNIARSADDSQPFAALAFKIMNDPFVGSLTFTRLYSGVLKKGDQMVNSTKGKRERVGRMMMMHAINREEIDEAFAGDIIALAGLKETTTGDTLCDPANQVVLETMTFPEPVIEIAVEPKTKADQEKMGLALARLAAEDPSFRVETDFESGQTIMKGMGELHLDILVDRMKREFKVEANIGAPQVAYRETISREAEIDYTHKKQTGGTGQFARVKLVITPTEPGEGYSFESKIVGGAVPKEYIPGVEKGIKSVMDSGPLAGFPVIDFRVALIDGAFHDVDSSVLAFEIASRAAMREGLKKAGAKLLEPIMKVEVVTPEEYTGGIIGDLTSRRGMVQGQDTRGNANVINAFVPLANMFGYINTLRSMSSGRAVFTMHFDHYDAVPQNISDEIQKKYA.

In terms of domain architecture, tr-type G spans 8 to 294 (ELYRNFGIMA…SVIDYLPSPL (287 aa)). GTP is bound by residues 17-24 (AHIDAGKT), 92-96 (DTPGH), and 146-149 (NKMD).

This sequence belongs to the TRAFAC class translation factor GTPase superfamily. Classic translation factor GTPase family. EF-G/EF-2 subfamily.

The protein resides in the cytoplasm. Functionally, catalyzes the GTP-dependent ribosomal translocation step during translation elongation. During this step, the ribosome changes from the pre-translocational (PRE) to the post-translocational (POST) state as the newly formed A-site-bound peptidyl-tRNA and P-site-bound deacylated tRNA move to the P and E sites, respectively. Catalyzes the coordinated movement of the two tRNA molecules, the mRNA and conformational changes in the ribosome. The polypeptide is Elongation factor G (Cereibacter sphaeroides (strain KD131 / KCTC 12085) (Rhodobacter sphaeroides)).